Consider the following 499-residue polypeptide: Probable alpha-L-arabinofuranosidase B (499 aa).

Residues 1–17 (MFSRRNLLALGLAATVS) form the signal peptide. The interval 18–335 (AGPCDIYEAG…ENIVAAKYVV (318 aa)) is catalytic. Intrachain disulfides connect Cys21/Cys31, Cys81/Cys86, and Cys176/Cys177. N-linked (GlcNAc...) asparagine glycosylation occurs at Asn83. N-linked (GlcNAc...) asparagine glycosylation occurs at Asn202. Asp219 is a binding site for substrate. Glu221 functions as the Nucleophile in the catalytic mechanism. Substrate-binding residues include Asn222, Asn223, Gly296, His416, Asn418, Phe419, Asp435, His463, Glu465, Leu468, and Asp488. The tract at residues 336–499 (GSLVSGPSFT…SFEIETAFAS (164 aa)) is ABD. Cysteines 401 and 439 form a disulfide.

It belongs to the glycosyl hydrolase 54 family.

It is found in the secreted. It catalyses the reaction Hydrolysis of terminal non-reducing alpha-L-arabinofuranoside residues in alpha-L-arabinosides.. The protein operates within glycan metabolism; L-arabinan degradation. Its function is as follows. Alpha-L-arabinofuranosidase involved in the degradation of arabinoxylan, a major component of plant hemicellulose. Able to hydrolyze 1,5-, 1,3- and 1,2-alpha-linkages not only in L-arabinofuranosyl oligosaccharides, but also in polysaccharides containing terminal non-reducing L-arabinofuranoses in side chains, like L-arabinan, arabinogalactan and arabinoxylan. This Aspergillus awamori (Black koji mold) protein is Probable alpha-L-arabinofuranosidase B (abfB).